The primary structure comprises 289 residues: ATP synthase gamma chain (289 aa).

It belongs to the ATPase gamma chain family. As to quaternary structure, F-type ATPases have 2 components, CF(1) - the catalytic core - and CF(0) - the membrane proton channel. CF(1) has five subunits: alpha(3), beta(3), gamma(1), delta(1), epsilon(1). CF(0) has three main subunits: a, b and c.

It localises to the cell membrane. Produces ATP from ADP in the presence of a proton gradient across the membrane. The gamma chain is believed to be important in regulating ATPase activity and the flow of protons through the CF(0) complex. This is ATP synthase gamma chain from Lactococcus lactis subsp. lactis (strain IL1403) (Streptococcus lactis).